The chain runs to 634 residues: Sodium-dependent neutral amino acid transporter B(0)AT1 (634 aa).

Topologically, residues 1–41 (MVRLVLPNPGLDARIPSLAELETIEQEEASSRPKWDNKAQY) are cytoplasmic. The residue at position 17 (S17) is a Phosphoserine. The chain crosses the membrane as a helical span at residues 42 to 62 (MLTCLGFCVGLGNVWRFPYLC). Residues 63–67 (QSHGG) lie on the Extracellular side of the membrane. The chain crosses the membrane as a helical span at residues 68–88 (GAFMIPFLILLVLEGIPLLYL). The Cytoplasmic segment spans residues 89–120 (EFAIGQRLRRGSLGVWSSIHPALKGLGLASML). Residues 121–141 (TSFMVGLYYNTIISWIMWYLF) traverse the membrane as a helical segment. At 142–192 (NSFQEPLPWSDCPLNENQTGYVDECARSSPVDYFWYRETLNISTSISDSGS) the chain is on the extracellular side. N-linked (GlcNAc...) asparagine glycans are attached at residues N158 and N182. A helical membrane pass occupies residues 193–213 (IQWWMLLCLACAWSVLYMCTI). At 214–221 (RGIETTGK) the chain is on the cytoplasmic side. A helical transmembrane segment spans residues 222-242 (AVYITSTLPYVVLTIFLIRGL). Topologically, residues 243-268 (TLKGATNGIVFLFTPNVTELAQPDTW) are extracellular. N258 carries an N-linked (GlcNAc...) asparagine glycan. The chain crosses the membrane as a helical span at residues 269 to 289 (LDAGAQVFFSFSLAFGGLISF). Residues 290-304 (SSYNSVHNNCEKDSV) lie on the Cytoplasmic side of the membrane. A helical transmembrane segment spans residues 305–325 (IVSIINGFTSVYVAIVVYSVI). At 326 to 413 (GFRATQRYDD…TEAITKMPLS (88 aa)) the chain is on the extracellular side. N-linked (GlcNAc...) asparagine glycosylation is found at N354 and N368. The helical transmembrane segment at 414–434 (PLWSVLFFIMLFCLGLSSMFG) threads the bilayer. Over 435 to 456 (NMEGVVVPLQDLRVIPPKWPKE) the chain is Cytoplasmic. The chain crosses the membrane as a helical span at residues 457 to 477 (VLTGLICLGTFLIGFIFTLNS). At 478–490 (GQYWLSLLDSYAG) the chain is on the extracellular side. A helical membrane pass occupies residues 491-511 (SIPLLIIAFCEMFSVVYVYGV). Residues 512–531 (DRFNKDIEFMIGHKPNIFWQ) are Cytoplasmic-facing. Residues 532–552 (VTWRVVSPLLMLIIFLFFFVV) traverse the membrane as a helical segment. The Extracellular portion of the chain corresponds to 553–581 (EVSQELTYSIWDPGYEEFPKSQKISYPNW). The helical transmembrane segment at 582-602 (VYVVVVIVAGVPSLTIPGYAI) threads the bilayer. Residues 603–634 (YKLIRNHCQKPGDHQGLVSTLSTASMNGDLKY) are Cytoplasmic-facing. The residue at position 627 (S627) is a Phosphoserine.

It belongs to the sodium:neurotransmitter symporter (SNF) (TC 2.A.22) family. SLC6A19 subfamily. As to quaternary structure, interacts in a tissue-specific manner with ACE2 in small intestine and with CLTRN in the kidney. Interacts with CLTRN; this interaction is required for trafficking of SLC6A19 to the plasma membrane and for its catalytic activation in kidneys. Interacts with ACE2; this interaction is required for trafficking of SLC6A19 to the plasma membrane and for its catalytic activation in intestine. Interacts with ANPEP; the interaction positively regulates its amino acid transporter activity. In terms of tissue distribution, robust expression in kidney and small intestine, with minimal expression in pancreas. Also expressed in stomach, liver, duodenum, ileocecum, colon and prostate. Not detected in testis, whole brain, cerebellum, fetal liver, spleen, skeletal muscle, uterus, heart or lung.

Its subcellular location is the cell membrane. The protein localises to the apical cell membrane. The enzyme catalyses L-alanine(in) + Na(+)(in) = L-alanine(out) + Na(+)(out). It carries out the reaction L-cysteine(in) + Na(+)(in) = L-cysteine(out) + Na(+)(out). The catalysed reaction is L-glutamine(in) + Na(+)(in) = L-glutamine(out) + Na(+)(out). It catalyses the reaction glycine(in) + Na(+)(in) = glycine(out) + Na(+)(out). The enzyme catalyses L-isoleucine(in) + Na(+)(in) = L-isoleucine(out) + Na(+)(out). It carries out the reaction L-leucine(in) + Na(+)(in) = L-leucine(out) + Na(+)(out). The catalysed reaction is L-methionine(in) + Na(+)(in) = L-methionine(out) + Na(+)(out). It catalyses the reaction L-phenylalanine(in) + Na(+)(in) = L-phenylalanine(out) + Na(+)(out). The enzyme catalyses L-serine(in) + Na(+)(in) = L-serine(out) + Na(+)(out). It carries out the reaction L-tryptophan(in) + Na(+)(in) = L-tryptophan(out) + Na(+)(out). The catalysed reaction is L-tyrosine(in) + Na(+)(in) = L-tyrosine(out) + Na(+)(out). It catalyses the reaction L-valine(in) + Na(+)(in) = L-valine(out) + Na(+)(out). Functionally, transporter that mediates resorption of neutral amino acids across the apical membrane of renal and intestinal epithelial cells. This uptake is sodium-dependent and chloride-independent. Requires CLTRN in kidney or ACE2 in intestine for cell surface expression and amino acid transporter activity. The polypeptide is Sodium-dependent neutral amino acid transporter B(0)AT1 (SLC6A19) (Homo sapiens (Human)).